A 198-amino-acid polypeptide reads, in one-letter code: Recombination protein RecR (198 aa).

The C4-type zinc-finger motif lies at 57 to 72 (CSVCGHITENDPCYIC). Positions 80-175 (SVICVVEDDK…KVTRLAQGLS (96 aa)) constitute a Toprim domain.

The protein belongs to the RecR family.

May play a role in DNA repair. It seems to be involved in an RecBC-independent recombinational process of DNA repair. It may act with RecF and RecO. This is Recombination protein RecR from Staphylococcus aureus (strain MRSA252).